The primary structure comprises 356 residues: Replication-associated protein (356 aa).

Residues 8–116 (RVQAKNYFLT…DGDTAEWGEF (109 aa)) enclose the CRESS-DNA virus Rep endonuclease domain. Residues 15–18 (FLTY) carry the RCR-1 motif. Positions 49, 57, and 59 each coordinate a divalent metal cation. Positions 57 to 59 (HLH) match the RCR-2 motif. Tyr-103 serves as the catalytic For DNA cleavage activity. Residues 103 to 106 (YIDK) carry the RCR-3 motif. A divalent metal cation is bound at residue Asp-107. The segment at 143–153 (VQSALNILKEE) is binding to RBR1. The interval 156–176 (KDYVLQNHNIRSNLERIFAKA) is oligomerization. 221–228 (EGDSRTGK) serves as a coordination point for ATP.

Belongs to the geminiviridae Rep protein family. Homooligomer. Interacts with the replication enhancer protein (REn). Interacts with host retinoblastoma-related protein 1 (RBR1), and may thereby induce the transcription of host replicative enzymes even if the cell is not dividing anymore. Interacts with host PCNA. Interacts with host SCE1 protein. Mg(2+) serves as cofactor. Mn(2+) is required as a cofactor.

Its subcellular location is the host nucleus. In terms of biological role, essential for the replication of viral ssDNA. The closed circular ssDNA genome is first converted to a superhelical dsDNA. Rep binds a specific region at the genome origin of replication. It introduces an endonucleolytic nick within the conserved sequence 5'-TAATATTAC-3' in the intergenic region of the genome present in all geminiviruses, thereby initiating the rolling circle replication (RCR). Following cleavage, binds covalently to the 5'-phosphate of DNA as a tyrosyl ester. The cleavage gives rise to a free 3'-OH that serves as a primer for the cellular DNA polymerase. The polymerase synthesizes the (+) strand DNA by rolling circle mechanism. After one round of replication, a Rep-catalyzed nucleotidyl transfer reaction releases a circular single-stranded virus genome, thereby terminating the replication. Displays origin-specific DNA cleavage, nucleotidyl transferase, ATPase and helicase activities. The polypeptide is Replication-associated protein (Abutilon (Upland cotton)).